The sequence spans 522 residues: Flavin-dependent halogenase armH1 (522 aa).

The FAD site is built by G16, A19, and E49. The chloride site is built by S328 and G329. I330 lines the FAD pocket.

This sequence belongs to the flavin-dependent halogenase family.

The catalysed reaction is melleolide F + FADH2 + chloride + O2 = 6'-chloromelleolide F + FAD + 2 H2O + H(+). Its function is as follows. Flavin-dependent halogenase involved in the biosynthesis of melleolides, a range of antifungal and phytotoxic polyketide derivatives composed of an orsellinic acid (OA) moiety esterified to various sesquiterpene alcohols. The halogenase catalyzes the transfer of a single chlorine atom to the melleolide backbone, resulting in a 6'-chloromelleolide product. The enzyme acts on free substrate and does not depend on carrier-protein-dependent acceptor molecules. The polypeptide is Flavin-dependent halogenase armH1 (Armillaria mellea (Honey mushroom)).